The primary structure comprises 183 residues: MKQLLEFIPLILFFTVYKLYGVQQAAITLVIATVIQLIVLKVLYKKIEKSQWIMGIFVVFFGILTAYFNDLNFLKWKVTIINGLFAAVLLVSQFVFKKPIIQMLLGKELKLPTNVWNRLNLGWAGFFIICMLLNIVISYYFSDDVWATFKTFGFTGLSLIAAIATGVYLYPHLKNVENTNEQA.

The next 5 membrane-spanning stretches (helical) occupy residues 19 to 39, 53 to 73, 76 to 96, 121 to 141, and 151 to 171; these read LYGVQQAAITLVIATVIQLIV, IMGIFVVFFGILTAYFNDLNF, WKVTIINGLFAAVLLVSQFVF, LGWAGFFIICMLLNIVISYYF, and TFGFTGLSLIAAIATGVYLYP.

It belongs to the YciB family.

Its subcellular location is the cell inner membrane. Functionally, plays a role in cell envelope biogenesis, maintenance of cell envelope integrity and membrane homeostasis. This chain is Inner membrane-spanning protein YciB, found in Actinobacillus pleuropneumoniae serotype 7 (strain AP76).